Consider the following 286-residue polypeptide: Myb family transcription factor PHL7 (286 aa).

In terms of domain architecture, HTH myb-type spans 12-72 (HASKQRLRWT…HLQKYRLAKY (61 aa)). The segment at residues 43–68 (PKGVLRVMGVQGLTIYHVKSHLQKYR) is a DNA-binding region (H-T-H motif). A disordered region spans residues 74 to 97 (PDSSSEGKKTDKKESGDMLSGLDG). Over residues 78–89 (SEGKKTDKKESG) the composition is skewed to basic and acidic residues. Residues 104 to 124 (TEALKLQMEVQKRLHEQLEVQ) are a coiled coil. The LHEQLE motif lies at 117-122 (LHEQLE). A disordered region spans residues 152 to 227 (LGEPSAPVTG…TGEERLSKKP (76 aa)).

This sequence belongs to the MYB-CC family.

Its subcellular location is the nucleus. The sequence is that of Myb family transcription factor PHL7 from Arabidopsis thaliana (Mouse-ear cress).